The sequence spans 381 residues: Malonyl-CoA-acyl carrier protein transacylase, mitochondrial (381 aa).

Residues Ser151 and His268 contribute to the active site. Lys312 carries the post-translational modification N6-succinyllysine.

The protein belongs to the type II malonyltransferase family. Expressed in retinal ganglion cells.

The protein localises to the mitochondrion. It carries out the reaction holo-[ACP] + malonyl-CoA = malonyl-[ACP] + CoA. It participates in lipid metabolism; fatty acid biosynthesis. Its function is as follows. Catalyzes the transfer of a malonyl moiety from malonyl-CoA to the free thiol group of the phosphopantetheine arm of the mitochondrial ACP protein (NDUFAB1). This suggests the existence of the biosynthesis of fatty acids in mitochondria. This chain is Malonyl-CoA-acyl carrier protein transacylase, mitochondrial, found in Mus musculus (Mouse).